Consider the following 301-residue polypeptide: GTP cyclohydrolase FolE2 (301 aa).

It belongs to the GTP cyclohydrolase IV family.

It carries out the reaction GTP + H2O = 7,8-dihydroneopterin 3'-triphosphate + formate + H(+). It participates in cofactor biosynthesis; 7,8-dihydroneopterin triphosphate biosynthesis; 7,8-dihydroneopterin triphosphate from GTP: step 1/1. In terms of biological role, converts GTP to 7,8-dihydroneopterin triphosphate. The protein is GTP cyclohydrolase FolE2 of Pseudomonas syringae pv. tomato (strain ATCC BAA-871 / DC3000).